The following is an 82-amino-acid chain: Large ribosomal subunit protein uL23 (82 aa).

Belongs to the universal ribosomal protein uL23 family. In terms of assembly, part of the 50S ribosomal subunit. Contacts protein L29.

Its function is as follows. Binds to 23S rRNA. One of the proteins that surrounds the polypeptide exit tunnel on the outside of the ribosome. The sequence is that of Large ribosomal subunit protein uL23 from Methanosarcina acetivorans (strain ATCC 35395 / DSM 2834 / JCM 12185 / C2A).